The chain runs to 578 residues: Longifolene synthase (578 aa).

3 residues coordinate Mg(2+): D331, D335, and D475. Positions 331–335 (DDLYD) match the DDXXD motif motif.

This sequence belongs to the terpene synthase family. Tpsd subfamily. The cofactor is Mg(2+). Requires Mn(2+) as cofactor.

It catalyses the reaction (2E,6E)-farnesyl diphosphate = longifolene + diphosphate. It participates in sesquiterpene biosynthesis. Its pathway is terpene metabolism; oleoresin biosynthesis. In terms of biological role, terpene synthase (TPS) involved in the biosynthesis of sesquiterpene natural products included in conifer oleoresin secretions and volatile emissions; these compounds contribute to biotic and abiotic stress defense against herbivores and pathogens. Catalyzes the conversion of (2E,6E)-farnesyl diphosphate (FPP) to longifolene. The chain is Longifolene synthase from Picea engelmannii x Picea glauca (Hybrid white spruce).